The sequence spans 791 residues: Ataxin-1 (791 aa).

Residues methionine 1–alanine 30 show a composition bias toward basic and acidic residues. Residues methionine 1–aspartate 36 are disordered. A Glycyl lysine isopeptide (Lys-Gly) (interchain with G-Cter in SUMO) cross-link involves residue lysine 16. Phosphoserine occurs at positions 81 and 87. Disordered regions lie at residues serine 187–proline 240 and glutamate 298–tyrosine 402. Lysine 193 is covalently cross-linked (Glycyl lysine isopeptide (Lys-Gly) (interchain with G-Cter in SUMO)). Serine 213 carries the phosphoserine modification. Residue threonine 218 is modified to Phosphothreonine. Composition is skewed to polar residues over residues glutamine 219–alanine 236, alanine 312–serine 327, and proline 362–aspartate 388. Serine 229 carries the phosphoserine modification. Residues valine 470 to isoleucine 580 form a self-association region. The segment at leucine 514–lysine 791 is interaction with USP7. The segment at threonine 516–proline 742 is RNA-binding. The AXH domain occupies serine 538–glycine 669. Glycyl lysine isopeptide (Lys-Gly) (interchain with G-Cter in SUMO) cross-links involve residues lysine 585, lysine 672, and lysine 721. Residues lysine 736–leucine 774 are disordered. Residue serine 751 is modified to Phosphoserine. The Nuclear localization signal signature appears at proline 770–serine 773.

It belongs to the ATXN1 family. Homooligomer. Interacts with PQBP1, UBQLN4 and USP7. Interacts with ANP32A. Interacts with CIC. Directly interacts with RBPJ; this interaction is disrupted in the presence of Notch intracellular domain. Interacts with ATXN1L; competes with ATXN1L for RBPJ-binding. Found in a complex with CIC and ATXN1L. Post-translationally, ubiquitinated by UBE3A, leading to its degradation by the proteasome. The presence of poly-Gln repeats in trangenic models developed to replicate phenotypes of the spinocerebellar ataxia 1 disease (SCA1) impair ubiquitination and degradation, leading to accumulation of Atxn1 in neurons and subsequent toxicity. In terms of processing, sumoylation is dependent on nuclear localization and phosphorylation at Ser-751. Expressed in the cortex and hypothalamus (at protein level). Widely expressed. In brain, the pattern of distribution is limited to neuron populations.

The protein resides in the cytoplasm. The protein localises to the nucleus. Chromatin-binding factor that repress Notch signaling in the absence of Notch intracellular domain by acting as a CBF1 corepressor. Binds to the HEY promoter and might assist, along with NCOR2, RBPJ-mediated repression. May be involved in RNA metabolism. In concert with CIC and ATXN1L, involved in brain development. The chain is Ataxin-1 (Atxn1) from Mus musculus (Mouse).